A 160-amino-acid polypeptide reads, in one-letter code: Cytochrome c-type biogenesis protein CcmE (160 aa).

At 1–8 (MSAPRKTR) the chain is on the cytoplasmic side. A helical; Signal-anchor for type II membrane protein transmembrane segment spans residues 9-29 (LYAILAVICGAVLTVALTLYA). Over 30–160 (LSSNIDLFYT…PAAVTEGKRL (131 aa)) the chain is Periplasmic. Heme-binding residues include H130 and Y134.

It belongs to the CcmE/CycJ family.

Its subcellular location is the cell inner membrane. Its function is as follows. Heme chaperone required for the biogenesis of c-type cytochromes. Transiently binds heme delivered by CcmC and transfers the heme to apo-cytochromes in a process facilitated by CcmF and CcmH. This chain is Cytochrome c-type biogenesis protein CcmE, found in Pectobacterium carotovorum subsp. carotovorum (strain PC1).